A 340-amino-acid chain; its full sequence is Uroporphyrinogen decarboxylase (340 aa).

Substrate-binding positions include 21–25 (RQAGR), Asp-71, Tyr-148, Ser-203, and His-316.

Belongs to the uroporphyrinogen decarboxylase family. As to quaternary structure, homodimer.

It is found in the cytoplasm. The catalysed reaction is uroporphyrinogen III + 4 H(+) = coproporphyrinogen III + 4 CO2. It functions in the pathway porphyrin-containing compound metabolism; protoporphyrin-IX biosynthesis; coproporphyrinogen-III from 5-aminolevulinate: step 4/4. Functionally, catalyzes the decarboxylation of four acetate groups of uroporphyrinogen-III to yield coproporphyrinogen-III. The polypeptide is Uroporphyrinogen decarboxylase (Campylobacter jejuni subsp. jejuni serotype O:6 (strain 81116 / NCTC 11828)).